Reading from the N-terminus, the 314-residue chain is Mitochondrial 2-oxoglutarate/malate carrier protein (314 aa).

Alanine 2 bears the N-acetylalanine mark. Serine 6 is modified (phosphoserine). Solcar repeat units follow at residues 23–108 (VKFL…LFER), 117–208 (PGFL…SKQF), and 217–306 (DNIL…MNKA). The helical transmembrane segment at 24–42 (KFLFGGLAGMGATVFVQPL) threads the bilayer. The residue at position 57 (lysine 57) is an N6-succinyllysine. Lysine 73 is subject to N6-acetyllysine. The helical transmembrane segment at 83–101 (GLSAGLLRQATYTTTRLGI) threads the bilayer. At tyrosine 102 the chain carries Phosphotyrosine. 3 helical membrane-spanning segments follow: residues 119–140 (FLLK…GTPA), 183–202 (GCIP…LASY), and 222–240 (HFCA…SMPV). Lysine 256 carries the N6-acetyllysine modification. A helical membrane pass occupies residues 281-300 (GFTPYYARLGPHTVLTFIFL).

This sequence belongs to the mitochondrial carrier (TC 2.A.29) family. Interacts with SMIM26. As to expression, most highly expressed in the heart.

The protein localises to the mitochondrion inner membrane. The enzyme catalyses (S)-malate(in) + 2-oxoglutarate(out) = (S)-malate(out) + 2-oxoglutarate(in). The catalysed reaction is malonate(in) + 2-oxoglutarate(out) = malonate(out) + 2-oxoglutarate(in). It catalyses the reaction succinate(in) + 2-oxoglutarate(out) = succinate(out) + 2-oxoglutarate(in). It carries out the reaction maleate(in) + 2-oxoglutarate(out) = maleate(out) + 2-oxoglutarate(in). The enzyme catalyses oxaloacetate(in) + 2-oxoglutarate(out) = oxaloacetate(out) + 2-oxoglutarate(in). Its function is as follows. Catalyzes the transport of 2-oxoglutarate (alpha-oxoglutarate) across the inner mitochondrial membrane in an electroneutral exchange for malate. Can also exchange 2-oxoglutarate for other dicarboxylic acids such as malonate, succinate, maleate and oxaloacetate, although with lower affinity. Contributes to several metabolic processes, including the malate-aspartate shuttle, the oxoglutarate/isocitrate shuttle, in gluconeogenesis from lactate, and in nitrogen metabolism. Maintains mitochondrial fusion and fission events, and the organization and morphology of cristae. Involved in the regulation of apoptosis. Helps protect from cytotoxic-induced apoptosis by modulating glutathione levels in mitochondria. The protein is Mitochondrial 2-oxoglutarate/malate carrier protein (SLC25A11) of Homo sapiens (Human).